We begin with the raw amino-acid sequence, 200 residues long: dITP/XTP pyrophosphatase (200 aa).

Substrate is bound at residue serine 8–lysine 13. Residues glutamate 40 and aspartate 69 each coordinate Mg(2+). Aspartate 69 functions as the Proton acceptor in the catalytic mechanism. Substrate contacts are provided by residues serine 70, phenylalanine 154–aspartate 157, lysine 177, and histidine 182–arginine 183.

Belongs to the HAM1 NTPase family. In terms of assembly, homodimer. The cofactor is Mg(2+).

The catalysed reaction is XTP + H2O = XMP + diphosphate + H(+). The enzyme catalyses dITP + H2O = dIMP + diphosphate + H(+). It catalyses the reaction ITP + H2O = IMP + diphosphate + H(+). Pyrophosphatase that catalyzes the hydrolysis of nucleoside triphosphates to their monophosphate derivatives, with a high preference for the non-canonical purine nucleotides XTP (xanthosine triphosphate), dITP (deoxyinosine triphosphate) and ITP. Seems to function as a house-cleaning enzyme that removes non-canonical purine nucleotides from the nucleotide pool, thus preventing their incorporation into DNA/RNA and avoiding chromosomal lesions. The chain is dITP/XTP pyrophosphatase from Coxiella burnetii (strain RSA 493 / Nine Mile phase I).